The sequence spans 369 residues: Probable serine/threonine-protein kinase DDB_G0291350 (369 aa).

Positions 22–367 (YTVNRILGEG…QVIERINQII (346 aa)) constitute a Protein kinase domain. ATP-binding positions include 28–36 (LGEGGFSFV) and Lys-51. The active-site Proton acceptor is the Asp-159. Positions 169 to 225 (NLRRPSNNNNNNNNNNNNNNNNNNNNNNNNNNNNNNNNNNNNNNNNNNNNNNNSEDS) are disordered. Over residues 175–221 (NNNNNNNNNNNNNNNNNNNNNNNNNNNNNNNNNNNNNNNNNNNNNNN) the composition is skewed to low complexity.

It belongs to the protein kinase superfamily. Ser/Thr protein kinase family.

The catalysed reaction is L-seryl-[protein] + ATP = O-phospho-L-seryl-[protein] + ADP + H(+). It carries out the reaction L-threonyl-[protein] + ATP = O-phospho-L-threonyl-[protein] + ADP + H(+). This Dictyostelium discoideum (Social amoeba) protein is Probable serine/threonine-protein kinase DDB_G0291350.